Here is a 134-residue protein sequence, read N- to C-terminus: RuBisCO chaperone RbcX (134 aa).

Positions S97–E134 are disordered. Polar residues predominate over residues Q111 to P122.

The protein belongs to the RbcX family. In terms of assembly, homodimer (RbcX2). Interacts with the exposed C-terminal peptide of RbcL ('Glu-459-Asp-468'); binds 2 RbcL peptides per RbcX2, stapling them into an RbcL2 dimer. A slightly longer peptide binds with a higher affinity, but no long-term stable interaction with RbcL is detected. Contacts a second RbcL monomer via its peripheral polar surface.

Its subcellular location is the carboxysome. The protein resides in the cytoplasm. In terms of biological role, an RbcL-specific chaperone. Required for assembly of the RbcL8 core, acting downstream of the major chaperonin (GroEL-GroES). Acts on newly folded RbcL, has a transient dynamic interaction with RbcL and is eventually displaced by RbcS. The central cleft of the RbcX homodimer (RbcX2) binds the C-terminus of an RbcL monomer, stabilizing the C-terminus and probably preventing its reassociation with chaperonin GroEL-ES. At the same time the peripheral region of RbcX2 binds a second RbcL monomer, bridging the RbcL homodimers in the correct orientation. The RbcX2(2)-bound RbcL dimers then assemble into the RbcL8 core (RbcL8-(RbcX2)8). RbcS binding triggers the release of RbcX2. Required for optimal reconstitution of RuBisCO into its RbcL8S8 holoenzyme form upon expression of rbcL-rbcS subunits in E.coli, and probably also in situ. A frameshift mutation that replaces half the protein reduces accumulation of both RbcL and RbcS subunits and halves activity of RuBisCO in situ and in E.coli. This Picosynechococcus sp. (strain ATCC 27264 / PCC 7002 / PR-6) (Agmenellum quadruplicatum) protein is RuBisCO chaperone RbcX.